A 1297-amino-acid chain; its full sequence is DNA-directed RNA polymerase subunit beta' (1297 aa).

Cys-60, Cys-62, Cys-75, and Cys-78 together coordinate Zn(2+). 3 residues coordinate Mg(2+): Asp-535, Asp-537, and Asp-539. 4 residues coordinate Zn(2+): Cys-883, Cys-961, Cys-968, and Cys-971.

The protein belongs to the RNA polymerase beta' chain family. In terms of assembly, the RNAP catalytic core consists of 2 alpha, 1 beta, 1 beta' and 1 omega subunit. When a sigma factor is associated with the core the holoenzyme is formed, which can initiate transcription. Requires Mg(2+) as cofactor. The cofactor is Zn(2+).

It carries out the reaction RNA(n) + a ribonucleoside 5'-triphosphate = RNA(n+1) + diphosphate. In terms of biological role, DNA-dependent RNA polymerase catalyzes the transcription of DNA into RNA using the four ribonucleoside triphosphates as substrates. This Salinispora tropica (strain ATCC BAA-916 / DSM 44818 / JCM 13857 / NBRC 105044 / CNB-440) protein is DNA-directed RNA polymerase subunit beta'.